The chain runs to 325 residues: Ribonucleoside-diphosphate reductase small chain (325 aa).

Residues aspartate 76, glutamate 107, and histidine 110 each coordinate Fe cation. Tyrosine 114 is an active-site residue. Fe cation is bound by residues glutamate 170, glutamate 204, and histidine 207.

Belongs to the ribonucleoside diphosphate reductase small chain family. In terms of assembly, heterodimer of a large and a small subunit. It depends on Fe cation as a cofactor.

It catalyses the reaction a 2'-deoxyribonucleoside 5'-diphosphate + [thioredoxin]-disulfide + H2O = a ribonucleoside 5'-diphosphate + [thioredoxin]-dithiol. Functionally, provides the precursors necessary for DNA synthesis. Catalyzes the biosynthesis of deoxyribonucleotides from the corresponding ribonucleotides. This is Ribonucleoside-diphosphate reductase small chain from Encephalitozoon cuniculi (strain GB-M1) (Microsporidian parasite).